Consider the following 130-residue polypeptide: Large ribosomal subunit protein bL12 (130 aa).

It belongs to the bacterial ribosomal protein bL12 family. As to quaternary structure, homodimer. Part of the ribosomal stalk of the 50S ribosomal subunit. Forms a multimeric L10(L12)X complex, where L10 forms an elongated spine to which 2 to 4 L12 dimers bind in a sequential fashion. Binds GTP-bound translation factors.

Its function is as follows. Forms part of the ribosomal stalk which helps the ribosome interact with GTP-bound translation factors. Is thus essential for accurate translation. This Thermobifida fusca (strain YX) protein is Large ribosomal subunit protein bL12.